The primary structure comprises 373 residues: 2-phosphonomethylmalate synthase (373 aa).

The region spanning 5–256 is the Pyruvate carboxyltransferase domain; that stretch reads LVLEDTTLRD…DLGIDLTKLK (252 aa).

Belongs to the alpha-IPM synthase/homocitrate synthase family.

The catalysed reaction is 3-phosphonopyruvate + acetyl-CoA + H2O = (R)-2-(phosphonomethyl)malate + CoA + H(+). It functions in the pathway antibiotic biosynthesis. In terms of biological role, acyltransferase involved in the biosynthesis of the phosphonate antibiotic FR-900098, a potent antimalarial agent that acts as an inhibitor of 1-deoxy-D-xylulose 5-phosphate reductoisomerase (DXR), the first enzyme in the nonmevalonate pathway for isoprenoid biosynthesis. Catalyzes the condensation between acetyl-CoA and phosphonopyruvate to yield (R)-2-(phosphonomethyl)malate. The protein is 2-phosphonomethylmalate synthase of Streptomyces rubellomurinus (strain ATCC 31215).